We begin with the raw amino-acid sequence, 252 residues long: Imidazole glycerol phosphate synthase subunit HisF (252 aa).

Catalysis depends on residues Asp11 and Asp130.

This sequence belongs to the HisA/HisF family. As to quaternary structure, heterodimer of HisH and HisF.

It localises to the cytoplasm. It carries out the reaction 5-[(5-phospho-1-deoxy-D-ribulos-1-ylimino)methylamino]-1-(5-phospho-beta-D-ribosyl)imidazole-4-carboxamide + L-glutamine = D-erythro-1-(imidazol-4-yl)glycerol 3-phosphate + 5-amino-1-(5-phospho-beta-D-ribosyl)imidazole-4-carboxamide + L-glutamate + H(+). It functions in the pathway amino-acid biosynthesis; L-histidine biosynthesis; L-histidine from 5-phospho-alpha-D-ribose 1-diphosphate: step 5/9. In terms of biological role, IGPS catalyzes the conversion of PRFAR and glutamine to IGP, AICAR and glutamate. The HisF subunit catalyzes the cyclization activity that produces IGP and AICAR from PRFAR using the ammonia provided by the HisH subunit. The polypeptide is Imidazole glycerol phosphate synthase subunit HisF (Dictyoglomus thermophilum (strain ATCC 35947 / DSM 3960 / H-6-12)).